The following is a 479-amino-acid chain: Aspartyl/glutamyl-tRNA(Asn/Gln) amidotransferase subunit B (479 aa).

It belongs to the GatB/GatE family. GatB subfamily. In terms of assembly, heterotrimer of A, B and C subunits.

The enzyme catalyses L-glutamyl-tRNA(Gln) + L-glutamine + ATP + H2O = L-glutaminyl-tRNA(Gln) + L-glutamate + ADP + phosphate + H(+). The catalysed reaction is L-aspartyl-tRNA(Asn) + L-glutamine + ATP + H2O = L-asparaginyl-tRNA(Asn) + L-glutamate + ADP + phosphate + 2 H(+). In terms of biological role, allows the formation of correctly charged Asn-tRNA(Asn) or Gln-tRNA(Gln) through the transamidation of misacylated Asp-tRNA(Asn) or Glu-tRNA(Gln) in organisms which lack either or both of asparaginyl-tRNA or glutaminyl-tRNA synthetases. The reaction takes place in the presence of glutamine and ATP through an activated phospho-Asp-tRNA(Asn) or phospho-Glu-tRNA(Gln). This chain is Aspartyl/glutamyl-tRNA(Asn/Gln) amidotransferase subunit B, found in Streptococcus equi subsp. zooepidemicus (strain MGCS10565).